A 114-amino-acid polypeptide reads, in one-letter code: Large ribosomal subunit protein bL19 (114 aa).

This sequence belongs to the bacterial ribosomal protein bL19 family.

Functionally, this protein is located at the 30S-50S ribosomal subunit interface and may play a role in the structure and function of the aminoacyl-tRNA binding site. This is Large ribosomal subunit protein bL19 from Bacillus cereus (strain AH187).